The following is a 160-amino-acid chain: SsrA-binding protein (160 aa).

The protein belongs to the SmpB family.

It localises to the cytoplasm. In terms of biological role, required for rescue of stalled ribosomes mediated by trans-translation. Binds to transfer-messenger RNA (tmRNA), required for stable association of tmRNA with ribosomes. tmRNA and SmpB together mimic tRNA shape, replacing the anticodon stem-loop with SmpB. tmRNA is encoded by the ssrA gene; the 2 termini fold to resemble tRNA(Ala) and it encodes a 'tag peptide', a short internal open reading frame. During trans-translation Ala-aminoacylated tmRNA acts like a tRNA, entering the A-site of stalled ribosomes, displacing the stalled mRNA. The ribosome then switches to translate the ORF on the tmRNA; the nascent peptide is terminated with the 'tag peptide' encoded by the tmRNA and targeted for degradation. The ribosome is freed to recommence translation, which seems to be the essential function of trans-translation. This is SsrA-binding protein from Salmonella agona (strain SL483).